A 321-amino-acid chain; its full sequence is Peroxidase 42 (321 aa).

Positions 1-29 (MATSSGSCLIISLLVVVVAAALSASTASA) are cleaved as a signal peptide. Glutamine 30 is subject to Pyrrolidone carboxylic acid. Disulfide bonds link cysteine 40/cysteine 118, cysteine 73/cysteine 78, cysteine 124/cysteine 315, and cysteine 202/cysteine 227. Histidine 71 acts as the Proton acceptor in catalysis. 5 residues coordinate Ca(2+): aspartate 72, isoleucine 75, glycine 77, aspartate 79, and serine 81. Asparagine 85 and asparagine 96 each carry an N-linked (GlcNAc...) asparagine glycan. Proline 165 contributes to the substrate binding site. Residue histidine 195 participates in heme b binding. A Ca(2+)-binding site is contributed by threonine 196. A glycan (N-linked (GlcNAc...) asparagine) is linked at asparagine 211. Residues aspartate 239, threonine 242, and glycine 247 each coordinate Ca(2+). Residue asparagine 270 is glycosylated (N-linked (GlcNAc...) asparagine).

The protein belongs to the peroxidase family. Classical plant (class III) peroxidase subfamily. Heme b is required as a cofactor. The cofactor is Ca(2+).

Its subcellular location is the secreted. It catalyses the reaction 2 a phenolic donor + H2O2 = 2 a phenolic radical donor + 2 H2O. Its function is as follows. Removal of H(2)O(2), oxidation of toxic reductants, biosynthesis and degradation of lignin, suberization, auxin catabolism, response to environmental stresses such as wounding, pathogen attack and oxidative stress. These functions might be dependent on each isozyme/isoform in each plant tissue. The protein is Peroxidase 42 (PER42) of Zea mays (Maize).